The chain runs to 687 residues: Amine oxidase [copper-containing] gamma 2 (687 aa).

The N-terminal stretch at 1–24 (MVELSFSQLLVLLLSLLFLFTTLA) is a signal peptide. Asn-154 is a glycosylation site (N-linked (GlcNAc...) asparagine). Residues Cys-169 and Cys-191 are joined by a disulfide bond. Asn-244 is a glycosylation site (N-linked (GlcNAc...) asparagine). 333–344 (YMDAGEFGLGPS) serves as a coordination point for substrate. Residue Asp-335 is the Proton acceptor of the active site. Cys-354 and Cys-380 are oxidised to a cystine. Residue 420–425 (VGNYDY) participates in substrate binding. Tyr-423 acts as the Schiff-base intermediate with substrate; via topaquinone in catalysis. Residue Tyr-423 is modified to 2',4',5'-topaquinone. Cu cation-binding residues include His-480 and His-482. Mn(2+) is bound by residues Asp-489, Met-490, and Asp-491. Residues Asn-497 and Asn-598 are each glycosylated (N-linked (GlcNAc...) asparagine). Mn(2+) contacts are provided by Asp-632 and Ile-633. His-643 is a binding site for Cu cation.

This sequence belongs to the copper/topaquinone oxidase family. As to quaternary structure, homodimer. Cu cation is required as a cofactor. It depends on Zn(2+) as a cofactor. Requires L-topaquinone as cofactor. The cofactor is Mn(2+). Topaquinone (TPQ) is generated by copper-dependent autoxidation of a specific tyrosyl residue. In terms of tissue distribution, expressed in roots, leaves and cotyledons.

The protein localises to the secreted. It localises to the extracellular space. The protein resides in the apoplast. It catalyses the reaction a primary methyl amine + O2 + H2O = an aldehyde + H2O2 + NH4(+). It participates in amine and polyamine degradation; putrescine degradation. Its function is as follows. Copper amine oxidase that can use putrescine and spermidine as substrates. This Arabidopsis thaliana (Mouse-ear cress) protein is Amine oxidase [copper-containing] gamma 2.